The sequence spans 262 residues: Aminoglycoside (3'') (9) adenylyltransferase (262 aa).

The catalysed reaction is streptomycin + ATP = 3''-O-adenylylstreptomycin + diphosphate. It catalyses the reaction spectinomycin + ATP = 9-O-adenylylspectinomycin + diphosphate. Mediates bacterial resistance to the antibiotics streptomycin and spectinomycin. The protein is Aminoglycoside (3'') (9) adenylyltransferase of Klebsiella pneumoniae.